Reading from the N-terminus, the 260-residue chain is Thiamine thiazole synthase (260 aa).

NAD(+) is bound by residues Ala-36, Glu-55–Gln-56, Gly-63, and His-154–Asp-156. Asp-156 and His-171 together coordinate Fe cation. Met-224 is a binding site for NAD(+). A glycine-binding site is contributed by Arg-234.

It belongs to the THI4 family. Homooctamer; tetramer of dimers. Fe(2+) serves as cofactor.

The enzyme catalyses hydrogen sulfide + glycine + NAD(+) = ADP-5-ethyl-4-methylthiazole-2-carboxylate + nicotinamide + 3 H2O + H(+). The protein operates within cofactor biosynthesis; thiamine diphosphate biosynthesis. Functionally, involved in the biosynthesis of the thiazole moiety of thiamine. Catalyzes the conversion of NAD and glycine to adenosine diphosphate 5-(2-hydroxyethyl)-4-methylthiazole-2-carboxylate (ADT), an adenylated thiazole intermediate, using free sulfide as a source of sulfur. This is Thiamine thiazole synthase from Methanosarcina acetivorans (strain ATCC 35395 / DSM 2834 / JCM 12185 / C2A).